A 422-amino-acid chain; its full sequence is UDP-N-acetylglucosamine 1-carboxyvinyltransferase (422 aa).

22–23 (KN) is a phosphoenolpyruvate binding site. A UDP-N-acetyl-alpha-D-glucosamine-binding site is contributed by arginine 93. The active-site Proton donor is the cysteine 117. A 2-(S-cysteinyl)pyruvic acid O-phosphothioketal modification is found at cysteine 117. UDP-N-acetyl-alpha-D-glucosamine-binding positions include 122 to 126 (RPVDL), aspartate 308, and leucine 330.

The protein belongs to the EPSP synthase family. MurA subfamily.

It localises to the cytoplasm. It catalyses the reaction phosphoenolpyruvate + UDP-N-acetyl-alpha-D-glucosamine = UDP-N-acetyl-3-O-(1-carboxyvinyl)-alpha-D-glucosamine + phosphate. Its pathway is cell wall biogenesis; peptidoglycan biosynthesis. Cell wall formation. Adds enolpyruvyl to UDP-N-acetylglucosamine. This Helicobacter pylori (strain HPAG1) protein is UDP-N-acetylglucosamine 1-carboxyvinyltransferase.